Here is a 151-residue protein sequence, read N- to C-terminus: Deoxyuridine 5'-triphosphate nucleotidohydrolase (151 aa).

Substrate is bound by residues 70–72 (RSG), N83, 87–89 (LID), and M97.

This sequence belongs to the dUTPase family. Requires Mg(2+) as cofactor.

It carries out the reaction dUTP + H2O = dUMP + diphosphate + H(+). Its pathway is pyrimidine metabolism; dUMP biosynthesis; dUMP from dCTP (dUTP route): step 2/2. Its function is as follows. This enzyme is involved in nucleotide metabolism: it produces dUMP, the immediate precursor of thymidine nucleotides and it decreases the intracellular concentration of dUTP so that uracil cannot be incorporated into DNA. The sequence is that of Deoxyuridine 5'-triphosphate nucleotidohydrolase from Shigella sonnei (strain Ss046).